Here is a 208-residue protein sequence, read N- to C-terminus: Ras-related protein Rab6 (208 aa).

19–27 (GEQSVGKTS) is a binding site for GTP. The short motif at 41-49 (YQATIGIDF) is the Effector region element. Residues 67–71 (DTAGQ), 125–128 (NKTD), and 155–157 (SAK) each bind GTP. A disordered region spans residues 176-208 (MDSTENKPSEDMQEVVLKDSPNETKDPEGGCAC). Basic and acidic residues predominate over residues 179–208 (TENKPSEDMQEVVLKDSPNETKDPEGGCAC).

The protein belongs to the small GTPase superfamily. Rab family. Interacts with Rich and Act5C. Interacts with BicD (via C-terminal domain). Interacts (in GTP-bound) with GCC1/CG10703 and cbs. Interacts with Gorab (via C-terminus); binds to a Gorab homodimer, this interaction seems to be required for trans-Golgi localization of Gorab. As to expression, expressed in larval eye, wing and leg imaginal disks and in salivary gland. Expressed in the larval optic lobe, showing an enrichment in the neuropil. In the adult brain, expressed in photoreceptors and mushroom body.

It localises to the golgi apparatus membrane. The protein localises to the synapse. It is found in the perikaryon. Its function is as follows. Protein transport. Regulator of membrane traffic from the Golgi apparatus towards the endoplasmic reticulum (ER). Mediates membrane trafficking during egg chamber growth and organization, possibly upstream of exocyst component Sec5. Also during oogenesis, plays a role, together with BicD but independently of Sec5, in the polarization of the oocyte microtubule cytoskeleton, in the localization of oskar mRNA and in the anterodorsal secretion of grk. Required for anterograde opsin transport through the ER-Golgi complex. Plays a role, together with Rich, in regulating CadN transport in photoreceptor cells which is required for the formation of normal synaptic connections between axons from the inner photoreceptor cells in the eye and postsynaptic cells in the brain medulla layer M6. Necessary for proper development of bristle shafts of macrochaete and microchaete on the head, thorax and scutellum. Modulates Notch signaling. As a key regulator of vesicular traffic, plays a critical role in the regulation of actin organization and is required for normal rates of phagocytic uptake during phagocytosis involved in defense against viral and fungal infection. The protein is Ras-related protein Rab6 of Drosophila melanogaster (Fruit fly).